Here is a 467-residue protein sequence, read N- to C-terminus: uncharacterized protein (467 aa).

Positions 1-60 (MVRVSRGCQSCVDAKLQSTPSPSPSKSPSPTESPEQCLQKRQSGEQVVLPSRPFPRTSPR) are disordered.

In terms of biological role, involved in osmoadaptation. This is an uncharacterized protein from Emericella nidulans (strain FGSC A4 / ATCC 38163 / CBS 112.46 / NRRL 194 / M139) (Aspergillus nidulans).